An 892-amino-acid polypeptide reads, in one-letter code: DNA mismatch repair protein MutS (892 aa).

Glycine 607–serine 614 is a binding site for ATP.

Belongs to the DNA mismatch repair MutS family.

This protein is involved in the repair of mismatches in DNA. It is possible that it carries out the mismatch recognition step. This protein has a weak ATPase activity. This is DNA mismatch repair protein MutS from Bacillus cereus (strain AH820).